Here is a 1111-residue protein sequence, read N- to C-terminus: Histone deacetylase 5 (1111 aa).

K35 is covalently cross-linked (Glycyl lysine isopeptide (Lys-Gly) (interchain with G-Cter in SUMO2)). 3 disordered regions span residues G40–L63, R107–R136, and K187–L272. Over residues D238–A249 the composition is skewed to basic and acidic residues. S250 bears the Phosphoserine; by AMPK, CaMK1, SIK1 and PKD/PRKD1 mark. Over residues K263–L272 the composition is skewed to basic and acidic residues. T283 is modified (phosphothreonine; by PKC). Residues T474 to S495 are disordered. A compositionally biased stretch (low complexity) spans S485 to S495. At S489 the chain carries Phosphoserine; by AMPK, CaMK1, SIK1 and PKD/PRKD1. An N6-acetyllysine modification is found at K524. Disordered stretches follow at residues T527–S611 and L645–T666. A compositionally biased stretch (acidic residues) spans S572–E610. Phosphoserine occurs at positions 600 and 650. Residues T671–Q1017 form a histone deacetylase region. The Zn(2+) site is built by C685, C687, H693, and C770. H822 is an active-site residue. Positions E1070–P1109 match the Nuclear export signal motif. Residues E1086 to L1111 are disordered. S1097 bears the Phosphoserine mark.

Belongs to the histone deacetylase family. HD type 2 subfamily. Interacts with AHRR, BAHD1, BCOR, HDAC7, HDAC9, CTBP1, MEF2C, NCOR2, NRIP1, PHB2 and a 14-3-3 chaperone protein. Interacts with BCL6, DDIT3/CHOP, GRK5, KDM5B and MYOCD. Interacts with EP300 in the presence of TFAP2C. Interacts with ANKRA2. Interacts with CUL7 (as part of the 3M complex); negatively regulated by ANKRA2. Interacts with ZBTB7B; the interaction allows the recruitment of HDAC4 on CD8 loci for deacetylation and possible inhibition of CD8 genes expression. Interacts with RARA. In terms of processing, phosphorylated by AMPK, CaMK1, SIK1 and PRKD1 at Ser-250 and Ser-489. The phosphorylation is required for the export to the cytoplasm and inhibition. Phosphorylated by the PKC kinases PKN1 and PKN2, impairing nuclear import. Phosphorylated by GRK5, leading to nuclear export of HDAC5 and allowing MEF2-mediated transcription. Post-translationally, ubiquitinated. Polyubiquitination however does not lead to its degradation.

It is found in the nucleus. The protein localises to the cytoplasm. It carries out the reaction N(6)-acetyl-L-lysyl-[histone] + H2O = L-lysyl-[histone] + acetate. In terms of biological role, responsible for the deacetylation of lysine residues on the N-terminal part of the core histones (H2A, H2B, H3 and H4). Histone deacetylation gives a tag for epigenetic repression and plays an important role in transcriptional regulation, cell cycle progression and developmental events. Histone deacetylases act via the formation of large multiprotein complexes. Involved in muscle maturation by repressing transcription of myocyte enhancer MEF2C. During muscle differentiation, it shuttles into the cytoplasm, allowing the expression of myocyte enhancer factors. Serves as a corepressor of RARA and causes its deacetylation. In association with RARA, plays a role in the repression of microRNA-10a and thereby in the inflammatory response. The sequence is that of Histone deacetylase 5 (HDAC5) from Cricetulus griseus (Chinese hamster).